Consider the following 470-residue polypeptide: MPNSTGKIAQVIGPVVDVAFPINDNLPEINNALTITRKDGSQLVLEVALELGDGVMRTIAMDSTDGLQRGMAVEDTGGPISVPVGKDTLGRVFNVLGDPIDDGEALDLNHRRDSIHRDAPKFEDLNTSSEILETGIKVIDLLEPYLRGGKVGLFGGAGVGKTVLIQELIHNIAEEHGGISVFTGVGERTREGNDLYFEMKESGVMENTAMVFGQMNEPPGARMRVALTGLTIAEYFRDVEGQDVLLFIDNIFRFTQAGSEVSALLGRIPSAVGYQPTLATEMGQLQERITSTKKGSVTSIQAIYVPADDYTDPAPRTTFAHLDATTNLERRLTEQGIYPAVDPLESSSSALTPEIVGEEHYKVATEVQQVLQRYRELQDIISILGMDELSDEEKVIVARARRVQFFLSQNFNVAERFTGQPGSYVPVEETVKGFKQILEGKYDDYPEDAFRSVGRIEEVVEKAKKMGFAP.

155-162 (GGAGVGKT) provides a ligand contact to ATP.

This sequence belongs to the ATPase alpha/beta chains family. In terms of assembly, F-type ATPases have 2 components, CF(1) - the catalytic core - and CF(0) - the membrane proton channel. CF(1) has five subunits: alpha(3), beta(3), gamma(1), delta(1), epsilon(1). CF(0) has three main subunits: a(1), b(2) and c(9-12). The alpha and beta chains form an alternating ring which encloses part of the gamma chain. CF(1) is attached to CF(0) by a central stalk formed by the gamma and epsilon chains, while a peripheral stalk is formed by the delta and b chains.

It is found in the cell membrane. It catalyses the reaction ATP + H2O + 4 H(+)(in) = ADP + phosphate + 5 H(+)(out). Functionally, produces ATP from ADP in the presence of a proton gradient across the membrane. The catalytic sites are hosted primarily by the beta subunits. The polypeptide is ATP synthase subunit beta (Lacticaseibacillus casei (Lactobacillus casei)).